Consider the following 328-residue polypeptide: Phosphate acetyltransferase (328 aa).

The protein belongs to the phosphate acetyltransferase and butyryltransferase family.

The protein resides in the cytoplasm. It catalyses the reaction acetyl-CoA + phosphate = acetyl phosphate + CoA. Its pathway is metabolic intermediate biosynthesis; acetyl-CoA biosynthesis; acetyl-CoA from acetate: step 2/2. The protein is Phosphate acetyltransferase (pta) of Staphylococcus aureus (strain COL).